A 201-amino-acid polypeptide reads, in one-letter code: Oligoribonuclease (201 aa).

The Exonuclease domain maps to 5–169 (MVWIDCEMTG…ADIRDSITEL (165 aa)). Residue Y126 is part of the active site.

This sequence belongs to the oligoribonuclease family.

The protein resides in the cytoplasm. In terms of biological role, 3'-to-5' exoribonuclease specific for small oligoribonucleotides. The sequence is that of Oligoribonuclease from Streptomyces griseus.